The primary structure comprises 294 residues: Acetylglutamate kinase (294 aa).

Substrate is bound by residues 67-68 (GG), Arg-89, and Asn-191.

Belongs to the acetylglutamate kinase family. ArgB subfamily.

The protein resides in the cytoplasm. The catalysed reaction is N-acetyl-L-glutamate + ATP = N-acetyl-L-glutamyl 5-phosphate + ADP. Its pathway is amino-acid biosynthesis; L-arginine biosynthesis; N(2)-acetyl-L-ornithine from L-glutamate: step 2/4. Its function is as follows. Catalyzes the ATP-dependent phosphorylation of N-acetyl-L-glutamate. This chain is Acetylglutamate kinase, found in Methylobacillus flagellatus (strain ATCC 51484 / DSM 6875 / VKM B-1610 / KT).